The chain runs to 218 residues: Guanylate kinase (218 aa).

The Guanylate kinase-like domain maps to 17 to 196 (GVLLALSSPS…ALEKLNEILH (180 aa)). 24-31 (SPSGAGKT) is a binding site for ATP.

The protein belongs to the guanylate kinase family.

The protein resides in the cytoplasm. It carries out the reaction GMP + ATP = GDP + ADP. Functionally, essential for recycling GMP and indirectly, cGMP. The sequence is that of Guanylate kinase from Maricaulis maris (strain MCS10) (Caulobacter maris).